The sequence spans 377 residues: Nitric oxide reductase FlRd-NAD(+) reductase (377 aa).

It belongs to the FAD-dependent oxidoreductase family. The cofactor is FAD.

It localises to the cytoplasm. The enzyme catalyses 2 reduced [nitric oxide reductase rubredoxin domain] + NAD(+) + H(+) = 2 oxidized [nitric oxide reductase rubredoxin domain] + NADH. Its pathway is nitrogen metabolism; nitric oxide reduction. Its function is as follows. One of at least two accessory proteins for anaerobic nitric oxide (NO) reductase. Reduces the rubredoxin moiety of NO reductase. This Klebsiella pneumoniae subsp. pneumoniae (strain ATCC 700721 / MGH 78578) protein is Nitric oxide reductase FlRd-NAD(+) reductase.